The following is a 420-amino-acid chain: Carbohydrate sulfotransferase 12 (420 aa).

Residues 1–5 (MAKSR) lie on the Cytoplasmic side of the membrane. The helical; Signal-anchor for type II membrane protein transmembrane segment at 6 to 26 (LFCLLVALGSVFMILFIIVYW) threads the bilayer. Over 27-420 (DNVGTANLNL…YPKPDDLLSV (394 aa)) the chain is Lumenal. Asn76 and Asn139 each carry an N-linked (GlcNAc...) asparagine glycan. A 3'-phosphoadenylyl sulfate-binding site is contributed by 176–182 (PKVACTN). An N-linked (GlcNAc...) asparagine glycan is attached at Asn215. Residue 251–259 (RDPFVRLIS) participates in 3'-phosphoadenylyl sulfate binding. 2 N-linked (GlcNAc...) asparagine glycosylation sites follow: Asn286 and Asn376.

Belongs to the sulfotransferase 2 family.

It localises to the golgi apparatus membrane. The catalysed reaction is chondroitin beta-D-glucuronate + n 3'-phosphoadenylyl sulfate = chondroitin 4'-sulfate + n adenosine 3',5'-bisphosphate + n H(+). Functionally, catalyzes the transfer of sulfate to position 4 of the N-acetylgalactosamine (GalNAc) residue of chondroitin and desulfated dermatan sulfate. Chondroitin sulfate constitutes the predominant proteoglycan present in cartilage and is distributed on the surfaces of many cells and extracellular matrices. This is Carbohydrate sulfotransferase 12 (chst12) from Xenopus laevis (African clawed frog).